We begin with the raw amino-acid sequence, 70 residues long: DNA-directed RNA polymerase subunit epsilon (70 aa).

It belongs to the RNA polymerase subunit epsilon family. In terms of assembly, RNAP is composed of a core of 2 alpha, a beta and a beta' subunit. The core is associated with a delta subunit, and at least one of epsilon or omega. When a sigma factor is associated with the core the holoenzyme is formed, which can initiate transcription.

It catalyses the reaction RNA(n) + a ribonucleoside 5'-triphosphate = RNA(n+1) + diphosphate. In terms of biological role, a non-essential component of RNA polymerase (RNAP). In Bacillus mycoides (strain KBAB4) (Bacillus weihenstephanensis), this protein is DNA-directed RNA polymerase subunit epsilon.